Reading from the N-terminus, the 631-residue chain is Dolichyl-diphosphooligosaccharide--protein glycosyltransferase subunit 2 (631 aa).

Positions methionine 1 to alanine 22 are cleaved as a signal peptide. At leucine 23–valine 540 the chain is on the lumenal side. Asparagine 106 is a glycosylation site (N-linked (GlcNAc...) asparagine). A Glycyl lysine isopeptide (Lys-Gly) (interchain with G-Cter in ubiquitin) cross-link involves residue lysine 154. The chain crosses the membrane as a helical span at residues valine 541–isoleucine 561. Residues arginine 562–threonine 571 are Cytoplasmic-facing. The chain crosses the membrane as a helical span at residues phenylalanine 572–valine 592. Topologically, residues tyrosine 593–glutamine 596 are lumenal. The helical transmembrane segment at leucine 597–glycine 617 threads the bilayer. Over asparagine 618–histidine 631 the chain is Cytoplasmic.

This sequence belongs to the SWP1 family. Component of the oligosaccharyltransferase (OST) complex. OST exists in two different complex forms which contain common core subunits RPN1, RPN2, OST48, OST4, DAD1 and TMEM258, either STT3A or STT3B as catalytic subunits, and form-specific accessory subunits. STT3A complex assembly occurs through the formation of 3 subcomplexes. Subcomplex 1 contains RPN1 and TMEM258, subcomplex 2 contains the STT3A-specific subunits STT3A, DC2/OSTC, and KCP2 as well as the core subunit OST4, and subcomplex 3 contains RPN2, DAD1, and OST48. The STT3A complex can form stable complexes with the Sec61 complex or with both the Sec61 and TRAP complexes. Interacts with DDI2. Interacts with TMEM35A/NACHO.

It localises to the endoplasmic reticulum. The protein resides in the endoplasmic reticulum membrane. The protein operates within protein modification; protein glycosylation. Subunit of the oligosaccharyl transferase (OST) complex that catalyzes the initial transfer of a defined glycan (Glc(3)Man(9)GlcNAc(2) in eukaryotes) from the lipid carrier dolichol-pyrophosphate to an asparagine residue within an Asn-X-Ser/Thr consensus motif in nascent polypeptide chains, the first step in protein N-glycosylation. N-glycosylation occurs cotranslationally and the complex associates with the Sec61 complex at the channel-forming translocon complex that mediates protein translocation across the endoplasmic reticulum (ER). All subunits are required for a maximal enzyme activity. This chain is Dolichyl-diphosphooligosaccharide--protein glycosyltransferase subunit 2, found in Rattus norvegicus (Rat).